The sequence spans 438 residues: 3-phosphoshikimate 1-carboxyvinyltransferase (438 aa).

Lysine 26, serine 27, and arginine 31 together coordinate 3-phosphoshikimate. Residue lysine 26 coordinates phosphoenolpyruvate. The phosphoenolpyruvate site is built by glycine 99 and arginine 127. The 3-phosphoshikimate site is built by serine 170, serine 171, glutamine 172, serine 199, glutamate 314, and histidine 343. A phosphoenolpyruvate-binding site is contributed by glutamine 172. Glutamate 314 functions as the Proton acceptor in the catalytic mechanism. Positions 347, 388, and 413 each coordinate phosphoenolpyruvate.

Belongs to the EPSP synthase family. As to quaternary structure, monomer.

Its subcellular location is the cytoplasm. It catalyses the reaction 3-phosphoshikimate + phosphoenolpyruvate = 5-O-(1-carboxyvinyl)-3-phosphoshikimate + phosphate. Its pathway is metabolic intermediate biosynthesis; chorismate biosynthesis; chorismate from D-erythrose 4-phosphate and phosphoenolpyruvate: step 6/7. Functionally, catalyzes the transfer of the enolpyruvyl moiety of phosphoenolpyruvate (PEP) to the 5-hydroxyl of shikimate-3-phosphate (S3P) to produce enolpyruvyl shikimate-3-phosphate and inorganic phosphate. In Mycobacterium sp. (strain MCS), this protein is 3-phosphoshikimate 1-carboxyvinyltransferase.